The chain runs to 430 residues: Flavin-dependent monooxygenase eupH (430 aa).

FAD contacts are provided by residues 11-14 (AGIG), 33-34 (ER), glutamine 43, arginine 107, tyrosine 282, and aspartate 306.

The protein belongs to the aromatic-ring hydroxylase family. FAD is required as a cofactor.

It participates in secondary metabolite biosynthesis; terpenoid biosynthesis. Flavin-dependent monooxygenase; part of the gene cluster that mediates the biosynthesis of eupenifeldin, a bistropolone meroterpenoid that acts as an antitumor agent. The first step of eupenifeldin biosynthesis is the biosynthesis of 3-methylorcinaldehyde performed by the non-reducing polyketide synthase eupA. Oxidative dearomatization of 3-methylorcinaldehyde likely catalyzed by the FAD-dependent monooxygenase eupB is followed by oxidative ring expansion by the 2-oxoglutarate-dependent dioxygenase eupC to provide the first tropolone metabolite, tropolone stipitaldehyde. In parallel, generation of sesquiterpene alpha-humulene from farnesylpyrophosphate (FPP) is catalyzed by the terpene cyclase eupE. The cytochrome P450 monooxygenase eupD then hydroxylates humulene to humulenol. The putative Diels-Alderase eupF probably catalyzes the formation of the tropolone-humulene skeleton by linking humulenol and the polyketide moiety. The short-chain dehydrogenase/reductase eupG and the flavin-dependent monooxygenase eupH are also essential for eupenifeldin biosynthesis and are likely the additional decorating enzymes of the tropolone-humulene skeleton to produce final eupenifeldin or derivatives. The protein is Flavin-dependent monooxygenase eupH of Phoma sp.